Here is a 125-residue protein sequence, read N- to C-terminus: Glycine cleavage system H protein (125 aa).

The region spanning 19–101 (VAVVGISDYA…EGKGWFMKLK (83 aa)) is the Lipoyl-binding domain. Residue lysine 60 is modified to N6-lipoyllysine.

The protein belongs to the GcvH family. As to quaternary structure, the glycine cleavage system is composed of four proteins: P, T, L and H. The cofactor is (R)-lipoate.

In terms of biological role, the glycine cleavage system catalyzes the degradation of glycine. The H protein shuttles the methylamine group of glycine from the P protein to the T protein. This chain is Glycine cleavage system H protein, found in Xanthobacter autotrophicus (strain ATCC BAA-1158 / Py2).